Reading from the N-terminus, the 115-residue chain is Large ribosomal subunit protein eL30 (115 aa).

Phosphoserine is present on residues Ser10 and Ser16. N6-acetyllysine; alternate is present on Lys26. Lys26 participates in a covalent cross-link: Glycyl lysine isopeptide (Lys-Gly) (interchain with G-Cter in SUMO2); alternate.

The protein belongs to the eukaryotic ribosomal protein eL30 family. As to quaternary structure, component of the large ribosomal subunit.

The protein resides in the cytoplasm. Its function is as follows. Component of the large ribosomal subunit. The ribosome is a large ribonucleoprotein complex responsible for the synthesis of proteins in the cell. The polypeptide is Large ribosomal subunit protein eL30 (RPL30) (Homo sapiens (Human)).